Consider the following 297-residue polypeptide: MIPLSIRVPASTANVGPGFDSVGIALSLYLHVVVKEKSDKWQVIHSFEDSIPTDDKNLIVSTACKVCPSLSPHIIEVTSNIPLTRGLGSSASAIVAGIELANQLGKLNLTIDQKVQIATNFEGHPDNVAASILGGTVIGALDGKNVSVVRIESKELGVISLIPNEELNTDESRSVLPDVFPFHEAVKASAISNVLVAALCQKKWKVVGEMMERDHFHEPYRLELVPLLPSIRKCAKEFGAYGTALSGAGPSIFILTPYEKRQEIAEQLARVFTSMKVCELEIDHRGITVNKKEHIGL.

82 to 92 (PLTRGLGSSAS) lines the ATP pocket.

This sequence belongs to the GHMP kinase family. Homoserine kinase subfamily.

The protein resides in the cytoplasm. It catalyses the reaction L-homoserine + ATP = O-phospho-L-homoserine + ADP + H(+). Its pathway is amino-acid biosynthesis; L-threonine biosynthesis; L-threonine from L-aspartate: step 4/5. Catalyzes the ATP-dependent phosphorylation of L-homoserine to L-homoserine phosphate. This Bacillus anthracis (strain CDC 684 / NRRL 3495) protein is Homoserine kinase.